A 161-amino-acid polypeptide reads, in one-letter code: HMG1/2-like protein (161 aa).

Disordered stretches follow at residues 1–46, 60–91, and 113–161; these read MKGA…KRAP, FKQKNPKNKSVAAVGKAAGERWKSLSESEKAP, and GESA…DDDE. Composition is skewed to basic and acidic residues over residues 10-27 and 77-89; these read AKADAKLAVKSKGAEKPA and AGERWKSLSESEK. The segment at residues 42–111 is a DNA-binding region (HMG box); sequence PKRAPSAFFV…EYNKAIAAYN (70 aa). The segment covering 114–123 has biased composition (low complexity); it reads ESAAAAAPKK. The segment covering 145–161 has biased composition (acidic residues); it reads NDDDDDEGSDEDEDDDE.

It belongs to the HMGB family.

It localises to the nucleus. This is HMG1/2-like protein from Triticum aestivum (Wheat).